The primary structure comprises 197 residues: Small ribosomal subunit protein uS7 (197 aa).

Belongs to the universal ribosomal protein uS7 family.

The chain is Small ribosomal subunit protein uS7 (RPS5) from Cicer arietinum (Chickpea).